We begin with the raw amino-acid sequence, 480 residues long: Glycogen synthase (480 aa).

Lys-15 serves as a coordination point for ADP-alpha-D-glucose.

Belongs to the glycosyltransferase 1 family. Bacterial/plant glycogen synthase subfamily.

The catalysed reaction is [(1-&gt;4)-alpha-D-glucosyl](n) + ADP-alpha-D-glucose = [(1-&gt;4)-alpha-D-glucosyl](n+1) + ADP + H(+). It participates in glycan biosynthesis; glycogen biosynthesis. Functionally, synthesizes alpha-1,4-glucan chains using ADP-glucose. In Clostridioides difficile (strain 630) (Peptoclostridium difficile), this protein is Glycogen synthase.